The chain runs to 210 residues: Thymidylate kinase (210 aa).

10–17 (GPEGAGKS) serves as a coordination point for ATP.

This sequence belongs to the thymidylate kinase family.

The catalysed reaction is dTMP + ATP = dTDP + ADP. Phosphorylation of dTMP to form dTDP in both de novo and salvage pathways of dTTP synthesis. This Pseudomonas syringae pv. syringae (strain B728a) protein is Thymidylate kinase.